Here is a 96-residue protein sequence, read N- to C-terminus: Interleukin-8 (96 aa).

The signal sequence occupies residues 1 to 22; the sequence is MTSKLAIALLATFMLSAALCEA. Arginine 27 is modified (citrulline). 2 disulfide bridges follow: cysteine 34-cysteine 61 and cysteine 36-cysteine 78.

This sequence belongs to the intercrine alpha (chemokine CxC) family. In terms of assembly, homodimer. Interacts with TNFAIP6 (via Link domain); this interaction interferes with chemokine binding to glycosaminoglycans. Post-translationally, citrullination at Arg-27 prevents proteolysis, and dampens tissue inflammation, it also enhances leukocytosis, possibly through impaired chemokine clearance from the blood circulation.

The protein resides in the secreted. Functionally, chemotactic factor that mediates inflammatory response by attracting neutrophils, basophils, and T-cells to clear pathogens and protect the host from infection. Also plays an important role in neutrophil activation. Released in response to an inflammatory stimulus, exerts its effect by binding to the G-protein-coupled receptors CXCR1 and CXCR2, primarily found in neutrophils, monocytes and endothelial cells. G-protein heterotrimer (alpha, beta, gamma subunits) constitutively binds to CXCR1/CXCR2 receptor and activation by IL8 leads to beta and gamma subunits release from Galpha (GNAI2 in neutrophils) and activation of several downstream signaling pathways including PI3K and MAPK pathways. The polypeptide is Interleukin-8 (CXCL8) (Dasypus novemcinctus (Nine-banded armadillo)).